A 254-amino-acid polypeptide reads, in one-letter code: rRNA N-glycosylase sapovaccarin-S1 (254 aa).

It belongs to the ribosome-inactivating protein family. Type 1 RIP subfamily. Expressed in seeds; most abundant in the perisperm.

It carries out the reaction Endohydrolysis of the N-glycosidic bond at one specific adenosine on the 28S rRNA.. In terms of biological role, exhibits N-glycosylase activity. Catalyzes the release of one adenine from a ribosome. Acts as a ribosome-inactivating protein and inhibits protein synthesis in a rabbit-reticulocyte lysate system and in various cell lines (in vitro). Induces cell death in Huh-7 liver cells. May contribute to the protection against plant pests and predators or play a role in regulating the death of plant cells. The polypeptide is rRNA N-glycosylase sapovaccarin-S1 (Gypsophila vaccaria (Cow soapwort)).